The chain runs to 728 residues: Probable ubiquitin-conjugating enzyme protein 17 (728 aa).

A compositionally biased stretch (low complexity) spans 1 to 17; it reads MSSQASQRSSSTSAVAQ. Disordered regions lie at residues 1–23 and 123–155; these read MSSQASQRSSSTSAVAQKTRERR and SSRSADEQKRRARRNSSASLSHKGTGYGTGSTR. Residues 402–568 form the UBC core domain; that stretch reads DRTKRIAKEL…IEHATLNYAI (167 aa). The active-site Glycyl thioester intermediate is the Cys-495. Disordered regions lie at residues 649 to 678 and 709 to 728; these read PFAKEEAEESERLKREQSEKEEKQKKEAAA and RTQPTGDYSVPSVNEPSTSS. A compositionally biased stretch (basic and acidic residues) spans 658–678; that stretch reads SERLKREQSEKEEKQKKEAAA. The segment covering 710–728 has biased composition (polar residues); sequence TQPTGDYSVPSVNEPSTSS.

This sequence belongs to the ubiquitin-conjugating enzyme family.

The polypeptide is Probable ubiquitin-conjugating enzyme protein 17 (ubc-17) (Caenorhabditis elegans).